We begin with the raw amino-acid sequence, 199 residues long: Recombination protein RecR (199 aa).

The C4-type zinc-finger motif lies at 57 to 72; sequence CSSCRTFTEESLCPIC. In terms of domain architecture, Toprim spans 81-176; it reads DLICVVETPA…NVSRIAHGVP (96 aa).

Belongs to the RecR family.

In terms of biological role, may play a role in DNA repair. It seems to be involved in an RecBC-independent recombinational process of DNA repair. It may act with RecF and RecO. This Shewanella loihica (strain ATCC BAA-1088 / PV-4) protein is Recombination protein RecR.